We begin with the raw amino-acid sequence, 504 residues long: Maturase K (504 aa).

Belongs to the intron maturase 2 family. MatK subfamily.

The protein localises to the plastid. It localises to the chloroplast. Usually encoded in the trnK tRNA gene intron. Probably assists in splicing its own and other chloroplast group II introns. The polypeptide is Maturase K (Taxus baccata (English yew)).